A 347-amino-acid polypeptide reads, in one-letter code: Protein RecA (347 aa).

Residue glycine 66–threonine 73 participates in ATP binding. A disordered region spans residues methionine 328–aspartate 347.

Belongs to the RecA family.

Its subcellular location is the cytoplasm. Can catalyze the hydrolysis of ATP in the presence of single-stranded DNA, the ATP-dependent uptake of single-stranded DNA by duplex DNA, and the ATP-dependent hybridization of homologous single-stranded DNAs. It interacts with LexA causing its activation and leading to its autocatalytic cleavage. The protein is Protein RecA of Hydrogenovibrio crunogenus (strain DSM 25203 / XCL-2) (Thiomicrospira crunogena).